A 740-amino-acid chain; its full sequence is 1,4-alpha-glucan branching enzyme GlgB (740 aa).

Residue aspartate 414 is the Nucleophile of the active site. The Proton donor role is filled by glutamate 467.

This sequence belongs to the glycosyl hydrolase 13 family. GlgB subfamily. In terms of assembly, monomer.

It carries out the reaction Transfers a segment of a (1-&gt;4)-alpha-D-glucan chain to a primary hydroxy group in a similar glucan chain.. It participates in glycan biosynthesis; glycogen biosynthesis. In terms of biological role, catalyzes the formation of the alpha-1,6-glucosidic linkages in glycogen by scission of a 1,4-alpha-linked oligosaccharide from growing alpha-1,4-glucan chains and the subsequent attachment of the oligosaccharide to the alpha-1,6 position. The sequence is that of 1,4-alpha-glucan branching enzyme GlgB from Rhodospirillum rubrum (strain ATCC 11170 / ATH 1.1.1 / DSM 467 / LMG 4362 / NCIMB 8255 / S1).